Here is a 270-residue protein sequence, read N- to C-terminus: Aliphatic sulfonates import ATP-binding protein SsuB (270 aa).

An ABC transporter domain is found at 17–238 (LASSGLRKTF…ARGSHRLAAL (222 aa)). 49–56 (GRSGCGKS) provides a ligand contact to ATP. The tract at residues 249–270 (APGAAPEPDPVAPLPTQLRWAH) is disordered.

This sequence belongs to the ABC transporter superfamily. Aliphatic sulfonates importer (TC 3.A.1.17.2) family. As to quaternary structure, the complex is composed of two ATP-binding proteins (SsuB), two transmembrane proteins (SsuC) and a solute-binding protein (SsuA).

The protein resides in the cell inner membrane. The enzyme catalyses ATP + H2O + aliphatic sulfonate-[sulfonate-binding protein]Side 1 = ADP + phosphate + aliphatic sulfonateSide 2 + [sulfonate-binding protein]Side 1.. Part of the ABC transporter complex SsuABC involved in aliphatic sulfonates import. Responsible for energy coupling to the transport system. The polypeptide is Aliphatic sulfonates import ATP-binding protein SsuB (Pseudomonas putida (Arthrobacter siderocapsulatus)).